A 313-amino-acid polypeptide reads, in one-letter code: Ribosomal RNA small subunit methyltransferase H (313 aa).

S-adenosyl-L-methionine contacts are provided by residues 31 to 33, Asp51, Phe77, Asp95, and Gln102; that span reads GGH.

The protein belongs to the methyltransferase superfamily. RsmH family.

It localises to the cytoplasm. It carries out the reaction cytidine(1402) in 16S rRNA + S-adenosyl-L-methionine = N(4)-methylcytidine(1402) in 16S rRNA + S-adenosyl-L-homocysteine + H(+). In terms of biological role, specifically methylates the N4 position of cytidine in position 1402 (C1402) of 16S rRNA. This is Ribosomal RNA small subunit methyltransferase H from Xylella fastidiosa (strain M23).